Here is a 290-residue protein sequence, read N- to C-terminus: MKRTPHLLAIQSHVVFGHAGNSAAVFPMQRVGVNVWPLNTVQFSNHTQYGQWAGEVLAPQQIPALVEGIAAIGELGNCDAILSGYLGSADQGRAILTGVARIKAINPKALYLCDPVMGHPEKGCIVPQEVSDFLLDEAAAMADFLCPNQLELDSFAGRKPQSLFDCLAMAKALLARGPKAVLVKHLDYPGKLPDGFEILLVTAEGSWHLRRPLLAFARQPVGVGDLTSGLFLARVLLGDSLLAAFEFTAAAVHEVLLETQACASYELELVRAQDRIAHPRVRFEATPIEL.

Substrate is bound by residues S12 and 47-48; that span reads TQ. Residues D114, E151, K184, and 211–214 each bind ATP; that span reads RPLL. D225 provides a ligand contact to substrate.

This sequence belongs to the pyridoxine kinase family. PdxY subfamily. Homodimer. Mg(2+) is required as a cofactor.

The catalysed reaction is pyridoxal + ATP = pyridoxal 5'-phosphate + ADP + H(+). The protein operates within cofactor metabolism; pyridoxal 5'-phosphate salvage; pyridoxal 5'-phosphate from pyridoxal: step 1/1. In terms of biological role, pyridoxal kinase involved in the salvage pathway of pyridoxal 5'-phosphate (PLP). Catalyzes the phosphorylation of pyridoxal to PLP. In Pseudomonas fluorescens (strain SBW25), this protein is Pyridoxal kinase PdxY.